Here is a 522-residue protein sequence, read N- to C-terminus: Maturase K (522 aa).

It belongs to the intron maturase 2 family. MatK subfamily.

It localises to the plastid. The protein localises to the chloroplast. Its function is as follows. Usually encoded in the trnK tRNA gene intron. Probably assists in splicing its own and other chloroplast group II introns. The protein is Maturase K of Iris sanguinea (Japanese iris).